Consider the following 277-residue polypeptide: Transcription antiterminator LicT (277 aa).

PRD domains are found at residues 65 to 170 (DIPI…EEMP) and 171 to 277 (NIIN…VKQA).

Belongs to the transcriptional antiterminator BglG family. Phosphorylated.

Mediates positive regulation of the glucanase operon (licST) by functioning as an antiterminator factor of transcription. Prevents termination at terminator lic-t. In Bacillus subtilis (strain 168), this protein is Transcription antiterminator LicT (licT).